The sequence spans 137 residues: Putative pre-16S rRNA nuclease (137 aa).

It belongs to the YqgF nuclease family.

It is found in the cytoplasm. Could be a nuclease involved in processing of the 5'-end of pre-16S rRNA. In Buchnera aphidicola subsp. Baizongia pistaciae (strain Bp), this protein is Putative pre-16S rRNA nuclease.